Consider the following 388-residue polypeptide: Oxytocin receptor (388 aa).

The Extracellular segment spans residues 1–38 (MEGTPAANWSIELDLGSGVPPGAEGNLTAGPPRRNEAL). Residues Asn-8 and Asn-26 are each glycosylated (N-linked (GlcNAc...) asparagine). Residues 39-63 (ARVEVAVLCLILFLALSGNACVLLA) form a helical membrane-spanning segment. Residues 64–74 (LRTTRHKHSRL) lie on the Cytoplasmic side of the membrane. A helical membrane pass occupies residues 75–97 (FFFMKHLSIADLVVAVFQVLPQL). The Extracellular segment spans residues 98–113 (LWDITFRFYGPDLLCR). A disulfide bridge connects residues Cys-112 and Cys-187. The helical transmembrane segment at 114 to 135 (LVKYLQVVGMFASTYLLLLMSL) threads the bilayer. Topologically, residues 136 to 154 (DRCLAICQPLRSLRRRTDR) are cytoplasmic. Residues 155-175 (LAVLATWLGCLVASVPQVHIF) traverse the membrane as a helical segment. Residues 176-202 (SLREVADGVFDCWAVFIQPWGPKAYVT) are Extracellular-facing. A helical membrane pass occupies residues 203-225 (WITLAVYIVPVIVLAACYGLISF). Residues 226–274 (KIWQNLRLKTAAAAAAAEGSDAAGGAGRAALARVSSVKLISKAKIRTVK) lie on the Cytoplasmic side of the membrane. A helical membrane pass occupies residues 275–293 (MTFIIVLAFIVCWTPFFFV). Residues 294 to 308 (QMWSVWDVNAPKEAS) lie on the Extracellular side of the membrane. A helical membrane pass occupies residues 309–331 (AFIIAMLLASLNSCCNPWIYMLF). Residues 332 to 388 (TGHLFHELVQRFLCCSARYLKGSRPGETSISKKSNSSTFVLSRRSSSQRSCSQPSSA) are Cytoplasmic-facing. Residues 354-388 (SRPGETSISKKSNSSTFVLSRRSSSQRSCSQPSSA) form a disordered region. Ser-365 and Ser-367 each carry phosphoserine. The segment covering 365 to 388 (SNSSTFVLSRRSSSQRSCSQPSSA) has biased composition (low complexity).

It belongs to the G-protein coupled receptor 1 family. Vasopressin/oxytocin receptor subfamily.

It localises to the cell membrane. Functionally, receptor for oxytocin. The activity of this receptor is mediated by G proteins which activate a phosphatidylinositol-calcium second messenger system. The protein is Oxytocin receptor (Oxtr) of Mus musculus (Mouse).